A 200-amino-acid polypeptide reads, in one-letter code: Small heat shock protein hspG2 (200 aa).

The 168-residue stretch at 33–200 folds into the sHSP domain; the sequence is NKRIDIIPSM…DNFQIKLKSI (168 aa). Residues 86–139 form a disordered region; the sequence is KLQQQQQQQSEKSSQSTNNKDDDEPSIEEYEDDTKLKSNLNKNTENKDENKTTS. The span at 88–101 shows a compositional bias: low complexity; that stretch reads QQQQQQQSEKSSQS. The segment covering 106-117 has biased composition (acidic residues); that stretch reads DDDEPSIEEYED.

It belongs to the small heat shock protein (HSP20) family.

This chain is Small heat shock protein hspG2 (hspG2), found in Dictyostelium discoideum (Social amoeba).